The chain runs to 218 residues: Thiopurine S-methyltransferase (218 aa).

Trp-10, Leu-45, Glu-66, and Arg-123 together coordinate S-adenosyl-L-methionine.

This sequence belongs to the class I-like SAM-binding methyltransferase superfamily. TPMT family.

It localises to the cytoplasm. The enzyme catalyses S-adenosyl-L-methionine + a thiopurine = S-adenosyl-L-homocysteine + a thiopurine S-methylether.. This chain is Thiopurine S-methyltransferase, found in Pseudomonas aeruginosa (strain LESB58).